The following is a 273-amino-acid chain: Urease accessory protein UreD (273 aa).

It belongs to the UreD family. UreD, UreF and UreG form a complex that acts as a GTP-hydrolysis-dependent molecular chaperone, activating the urease apoprotein by helping to assemble the nickel containing metallocenter of UreC. The UreE protein probably delivers the nickel.

The protein localises to the cytoplasm. In terms of biological role, required for maturation of urease via the functional incorporation of the urease nickel metallocenter. This is Urease accessory protein UreD from Rhizobium leguminosarum bv. viciae.